We begin with the raw amino-acid sequence, 243 residues long: Probable aquaporin SIP1-2 (243 aa).

The next 2 helical transmembrane spans lie at 12–32 (VITF…AAIV) and 42–62 (WAPL…FTVI). Positions 72–74 (NPC) match the NPA 1 motif. Helical transmembrane passes span 90-110 (FSLA…AITI), 135-155 (GAIS…LIIL), and 162-182 (LAKT…GSKF). Positions 188 to 190 (NPA) match the NPA 2 motif. The helical transmembrane segment at 210–230 (VYWISSYTGAILSAMLFRIIF) threads the bilayer.

The protein belongs to the MIP/aquaporin (TC 1.A.8) family. SIP (TC 1.A.8.10) subfamily. Expressed in roots and above ground. Expressed in elongating regions of the root tips, cotyledons, minor veins and hydathode cells of the rosette leaves. Weakly expressed in vascular tissues of the flower petals, filaments of stamens, upper part of the styles and receptacles of the siliques.

It is found in the endoplasmic reticulum membrane. In terms of biological role, water channel required to facilitate the transport of water across cell membrane. The sequence is that of Probable aquaporin SIP1-2 (SIP1-2) from Arabidopsis thaliana (Mouse-ear cress).